The chain runs to 133 residues: MTDKYKERRFDTYGYEKIDKEVLESIEYEYPEKNTIVEYITNEFSSVCPWTGLPDNAKLTIRYIPSKKLVELKSLKYYLTSYRNVGILQEHAINRILDDLVELLQPKFMEIIGEFQERGGIATRIVAKYEKEK.

Cysteine 48 (thioimide intermediate) is an active-site residue. Residue aspartate 55 is the Proton donor of the active site. Substrate-binding positions include 70–72 (VEL) and 89–90 (QE).

The protein belongs to the GTP cyclohydrolase I family. QueF type 1 subfamily.

The protein resides in the cytoplasm. The enzyme catalyses 7-aminomethyl-7-carbaguanine + 2 NADP(+) = 7-cyano-7-deazaguanine + 2 NADPH + 3 H(+). It functions in the pathway tRNA modification; tRNA-queuosine biosynthesis. Catalyzes the NADPH-dependent reduction of 7-cyano-7-deazaguanine (preQ0) to 7-aminomethyl-7-deazaguanine (preQ1). The sequence is that of NADPH-dependent 7-cyano-7-deazaguanine reductase from Thermoanaerobacter pseudethanolicus (strain ATCC 33223 / 39E) (Clostridium thermohydrosulfuricum).